Reading from the N-terminus, the 301-residue chain is MSNDKSYCGFIAIVGRPNVGKSTLLNKLLGQKISITSRKAQTTRHRIVGIHTEGAYQAIYVDTPGLHMEEKRAINRLMNKAASSSIGDVELVIFVVEGTRWTPDDEMVLNKLRDGKAPVILAVNKVDNVQEKADLLPHLQFLASQMNFLDIVPISAETGLNVDTIAAIVRKHLPEATHHFPEDYITDRSQRFMASEIIREKLMRFLGAELPYSVTVEIERFVSNERGGYDINGLILVEREGQKKMVIGNKGAKIKTIGIEARKDMQEMFEAPVHLELWVKVKSGWADDERALRSLGYVDDL.

An Era-type G domain is found at 7 to 175; that stretch reads YCGFIAIVGR…AAIVRKHLPE (169 aa). Residues 15–22 form a G1 region; it reads GRPNVGKS. Residue 15–22 coordinates GTP; it reads GRPNVGKS. The tract at residues 41-45 is G2; that stretch reads QTTRH. Positions 62–65 are G3; that stretch reads DTPG. GTP is bound by residues 62–66 and 124–127; these read DTPGL and NKVD. The tract at residues 124-127 is G4; that stretch reads NKVD. The interval 154–156 is G5; sequence ISA. A KH type-2 domain is found at 206-283; sequence LGAELPYSVT…HLELWVKVKS (78 aa).

This sequence belongs to the TRAFAC class TrmE-Era-EngA-EngB-Septin-like GTPase superfamily. Era GTPase family. Monomer.

It localises to the cytoplasm. It is found in the cell inner membrane. In terms of biological role, an essential GTPase that binds both GDP and GTP, with rapid nucleotide exchange. Plays a role in 16S rRNA processing and 30S ribosomal subunit biogenesis and possibly also in cell cycle regulation and energy metabolism. The polypeptide is GTPase Era (Escherichia fergusonii (strain ATCC 35469 / DSM 13698 / CCUG 18766 / IAM 14443 / JCM 21226 / LMG 7866 / NBRC 102419 / NCTC 12128 / CDC 0568-73)).